Here is a 133-residue protein sequence, read N- to C-terminus: ATP synthase epsilon chain (133 aa).

It belongs to the ATPase epsilon chain family. As to quaternary structure, F-type ATPases have 2 components, CF(1) - the catalytic core - and CF(0) - the membrane proton channel. CF(1) has five subunits: alpha(3), beta(3), gamma(1), delta(1), epsilon(1). CF(0) has three main subunits: a, b and c.

The protein resides in the cell membrane. Produces ATP from ADP in the presence of a proton gradient across the membrane. This is ATP synthase epsilon chain from Clostridium botulinum (strain Langeland / NCTC 10281 / Type F).